We begin with the raw amino-acid sequence, 121 residues long: Ribonuclease P protein component (121 aa).

This sequence belongs to the RnpA family. In terms of assembly, consists of a catalytic RNA component (M1 or rnpB) and a protein subunit.

It catalyses the reaction Endonucleolytic cleavage of RNA, removing 5'-extranucleotides from tRNA precursor.. Functionally, RNaseP catalyzes the removal of the 5'-leader sequence from pre-tRNA to produce the mature 5'-terminus. It can also cleave other RNA substrates such as 4.5S RNA. The protein component plays an auxiliary but essential role in vivo by binding to the 5'-leader sequence and broadening the substrate specificity of the ribozyme. The protein is Ribonuclease P protein component of Alcanivorax borkumensis (strain ATCC 700651 / DSM 11573 / NCIMB 13689 / SK2).